The chain runs to 1155 residues: uncharacterized protein (1155 aa).

A signal peptide spans 1–19 (MNKNIFITLLISSLLLLSG). The N-palmitoyl cysteine moiety is linked to residue Cys-20. Cys-20 carries the S-diacylglycerol cysteine lipid modification. 4 helical membrane-spanning segments follow: residues 291–311 (VSAI…IGNI), 395–415 (LGFI…FLIF), 424–444 (ALIT…FMLF), and 459–479 (ISYA…SMII).

Belongs to the TrbL/VirB6 family.

Its subcellular location is the cell membrane. This is an uncharacterized protein from Rickettsia felis (strain ATCC VR-1525 / URRWXCal2) (Rickettsia azadi).